A 274-amino-acid chain; its full sequence is Thiamine kinase (274 aa).

Belongs to the thiamine kinase family.

The catalysed reaction is thiamine + ATP = thiamine phosphate + ADP + H(+). Its pathway is cofactor biosynthesis; thiamine diphosphate biosynthesis; thiamine phosphate from thiamine: step 1/1. Catalyzes the ATP-dependent phosphorylation of thiamine to thiamine phosphate. Is involved in thiamine salvage. In Shigella sonnei (strain Ss046), this protein is Thiamine kinase.